A 297-amino-acid polypeptide reads, in one-letter code: 1D-myo-inositol 2-acetamido-2-deoxy-alpha-D-glucopyranoside deacetylase (297 aa).

Residues H14, D17, and H149 each coordinate Zn(2+).

This sequence belongs to the MshB deacetylase family. The cofactor is Zn(2+).

The catalysed reaction is 1D-myo-inositol 2-acetamido-2-deoxy-alpha-D-glucopyranoside + H2O = 1D-myo-inositol 2-amino-2-deoxy-alpha-D-glucopyranoside + acetate. Catalyzes the deacetylation of 1D-myo-inositol 2-acetamido-2-deoxy-alpha-D-glucopyranoside (GlcNAc-Ins) in the mycothiol biosynthesis pathway. This is 1D-myo-inositol 2-acetamido-2-deoxy-alpha-D-glucopyranoside deacetylase from Thermomonospora curvata (strain ATCC 19995 / DSM 43183 / JCM 3096 / KCTC 9072 / NBRC 15933 / NCIMB 10081 / Henssen B9).